The following is a 56-amino-acid chain: uncharacterized protein (56 aa).

The helical transmembrane segment at 30–52 (IKIGIICVIITWAIFSINHHHTI) threads the bilayer.

Its subcellular location is the membrane. This is an uncharacterized protein from Dictyostelium discoideum (Social amoeba).